The sequence spans 91 residues: MARVTVQDAVEKIGNRFDLVLVAARRARQIQSGGKDALVPEENDKVTVIALREIEEGLITNQILDVRERQEQQEQQAAEIQAVTAIAEGRR.

The protein belongs to the RNA polymerase subunit omega family. The RNAP catalytic core consists of 2 alpha, 1 beta, 1 beta' and 1 omega subunit. When a sigma factor is associated with the core the holoenzyme is formed, which can initiate transcription.

It catalyses the reaction RNA(n) + a ribonucleoside 5'-triphosphate = RNA(n+1) + diphosphate. In terms of biological role, promotes RNA polymerase assembly. Latches the N- and C-terminal regions of the beta' subunit thereby facilitating its interaction with the beta and alpha subunits. The sequence is that of DNA-directed RNA polymerase subunit omega from Yersinia pestis bv. Antiqua (strain Antiqua).